The following is a 416-amino-acid chain: Serine hydroxymethyltransferase (416 aa).

(6S)-5,6,7,8-tetrahydrofolate-binding positions include leucine 121 and 125–127 (GHL). Lysine 229 is subject to N6-(pyridoxal phosphate)lysine.

It belongs to the SHMT family. Homodimer. Requires pyridoxal 5'-phosphate as cofactor.

The protein localises to the cytoplasm. The catalysed reaction is (6R)-5,10-methylene-5,6,7,8-tetrahydrofolate + glycine + H2O = (6S)-5,6,7,8-tetrahydrofolate + L-serine. Its pathway is one-carbon metabolism; tetrahydrofolate interconversion. It participates in amino-acid biosynthesis; glycine biosynthesis; glycine from L-serine: step 1/1. Catalyzes the reversible interconversion of serine and glycine with tetrahydrofolate (THF) serving as the one-carbon carrier. This reaction serves as the major source of one-carbon groups required for the biosynthesis of purines, thymidylate, methionine, and other important biomolecules. Also exhibits THF-independent aldolase activity toward beta-hydroxyamino acids, producing glycine and aldehydes, via a retro-aldol mechanism. The sequence is that of Serine hydroxymethyltransferase from Dechloromonas aromatica (strain RCB).